Here is a 246-residue protein sequence, read N- to C-terminus: MEFNKAQNIIGLRVLNDNVIWLWEKDKSVVVIDPAIHEPVIRYIDENNLYIKAILQTHHHSDHIGGTKYLIERWPNVQVIASSKDKKRIPFQNISVEDGETLNILGEEIKIIEVLGHTNSHIAFFVNGESPVLFIGDTLFSGGCGRIFEGTYQQMYSSLERIKSLPKNTLIYCAHEYTKANLLWALNLKPKDQDIKNKLLQVEKKLSINELTIPFLLDEEMKINLFLRAKNLKEFTFLRENKDLWV.

His-58, His-60, Asp-62, His-63, His-117, Asp-137, and His-175 together coordinate Zn(2+).

The protein belongs to the metallo-beta-lactamase superfamily. Glyoxalase II family. In terms of assembly, monomer. Zn(2+) is required as a cofactor.

The enzyme catalyses an S-(2-hydroxyacyl)glutathione + H2O = a 2-hydroxy carboxylate + glutathione + H(+). The protein operates within secondary metabolite metabolism; methylglyoxal degradation; (R)-lactate from methylglyoxal: step 2/2. Thiolesterase that catalyzes the hydrolysis of S-D-lactoyl-glutathione to form glutathione and D-lactic acid. The sequence is that of Hydroxyacylglutathione hydrolase from Prochlorococcus marinus (strain MIT 9312).